Reading from the N-terminus, the 41-residue chain is MLVVEKSINTSYAYSFLGINKCLKKFNIDIVDVNASQKYLY.

Its subcellular location is the plastid. The protein resides in the chloroplast. This is an uncharacterized protein from Trieres chinensis (Marine centric diatom).